The following is a 452-amino-acid chain: Exoglucanase 1 (452 aa).

A signal peptide spans 1–18 (MFSKFALTGSLLAGAVNA). A glycan (N-linked (GlcNAc...) asparagine) is linked at asparagine 75. The active-site Nucleophile is glutamate 230. The active-site Proton donor is glutamate 235. Asparagine 335 and asparagine 360 each carry an N-linked (GlcNAc...) asparagine glycan.

Belongs to the glycosyl hydrolase 7 (cellulase C) family.

It catalyses the reaction Hydrolysis of (1-&gt;4)-beta-D-glucosidic linkages in cellulose and cellotetraose, releasing cellobiose from the non-reducing ends of the chains.. Functionally, the biological conversion of cellulose to glucose generally requires three types of hydrolytic enzymes: (1) Endoglucanases which cut internal beta-1,4-glucosidic bonds; (2) Exocellobiohydrolases that cut the disaccharide cellobiose from the non-reducing end of the cellulose polymer chain; (3) Beta-1,4-glucosidases which hydrolyze the cellobiose and other short cello-oligosaccharides to glucose. This is Exoglucanase 1 (CBH-1) from Cryphonectria parasitica (Chestnut blight fungus).